A 255-amino-acid polypeptide reads, in one-letter code: Taurine import ATP-binding protein TauB (255 aa).

An ABC transporter domain is found at 2–229 (LQISHLYADY…RFVAGESSRS (228 aa)). Residue 34–41 (GPSGCGKT) participates in ATP binding.

This sequence belongs to the ABC transporter superfamily. Taurine importer (TC 3.A.1.17.1) family. The complex is composed of two ATP-binding proteins (TauB), two transmembrane proteins (TauC) and a solute-binding protein (TauA).

The protein localises to the cell inner membrane. The catalysed reaction is taurine(out) + ATP + H2O = taurine(in) + ADP + phosphate + H(+). In terms of biological role, part of the ABC transporter complex TauABC involved in taurine import. Responsible for energy coupling to the transport system. In Shigella flexneri serotype 5b (strain 8401), this protein is Taurine import ATP-binding protein TauB.